Reading from the N-terminus, the 1262-residue chain is Structural maintenance of chromosomes protein 1 (1262 aa).

Positions 171–497 (SRSHEFQAEY…VAVVRQLSEA (327 aa)) form a coiled coil. An SMC hinge domain is found at 524–642 (SVYGRLVDLC…ESQEDAKQLA (119 aa)). The stretch at 680-937 (KKWDEKVVKQ…RLESLLTKKQ (258 aa)) forms a coiled coil. The disordered stretch occupies residues 965–994 (EYEEDDGDDTASQSSQSATDGPSVSEEQIQ). The segment covering 974–991 (TASQSSQSATDGPSVSEE) has biased composition (polar residues). Residues 1017–1086 (DGVRQMSNRL…QQFEKVKTDR (70 aa)) adopt a coiled-coil conformation. Residues 1148–1183 (LSGGEKTIAALALLFAVHGRNPAPFFVLDEIDAALD) carry the DA-box motif.

This sequence belongs to the SMC family. SMC1 subfamily. In terms of assembly, component of the cohesin complex, composed of the smc-1 and smc-3 heterodimer attached via their SMC hinge domain, scc-1 which links them, and scc-3. Interacts with smc-3, scc-1, scc-3 and tim-1.

Its subcellular location is the nucleus. It localises to the chromosome. In terms of biological role, involved in chromosome cohesion during cell cycle and in DNA repair. Required for chromosome segregation during mitosis. Central component of cohesin complex. The cohesin complex is required for the cohesion of sister chromatids after DNA replication. The cohesin complex apparently forms a large proteinaceous ring within which sister chromatids can be trapped. At anaphase, the complex is cleaved and dissociates from chromatin, allowing sister chromatids to segregate. The chain is Structural maintenance of chromosomes protein 1 from Caenorhabditis elegans.